The primary structure comprises 510 residues: Probable lysine--tRNA ligase, cytoplasmic (510 aa).

It belongs to the class-II aminoacyl-tRNA synthetase family. Homodimer.

The protein resides in the cytoplasm. It catalyses the reaction tRNA(Lys) + L-lysine + ATP = L-lysyl-tRNA(Lys) + AMP + diphosphate. The chain is Probable lysine--tRNA ligase, cytoplasmic from Encephalitozoon cuniculi (strain GB-M1) (Microsporidian parasite).